A 162-amino-acid polypeptide reads, in one-letter code: Transcriptional repressor NrdR (162 aa).

Residues 3-34 fold into a zinc finger; the sequence is CPYCHHTDSRVLESRSAEGGQSIRRRRECLAC. The ATP-cone domain maps to 49–139; the sequence is ITVIKRNGDR…VYRQFQGISD (91 aa).

Belongs to the NrdR family. Zn(2+) serves as cofactor.

Its function is as follows. Negatively regulates transcription of bacterial ribonucleotide reductase nrd genes and operons by binding to NrdR-boxes. The chain is Transcriptional repressor NrdR from Thermosynechococcus vestitus (strain NIES-2133 / IAM M-273 / BP-1).